A 1224-amino-acid polypeptide reads, in one-letter code: Cytosolic carboxypeptidase 1 (1224 aa).

The segment at 361–398 (PPDVDDVVDESDDNDDAETESEIETEDDKDQNFKNDDI) is disordered. Positions 363–389 (DVDDVVDESDDNDDAETESEIETEDDK) are enriched in acidic residues. Positions 846–1136 (YPYTYSTLKM…KFCVGLLRLK (291 aa)) constitute a Peptidase M14 domain. Zn(2+)-binding residues include His918, Glu921, and His1015. Glu1100 (proton donor/acceptor) is an active-site residue. Over residues 1186–1197 (SAESNDDQDAEL) the composition is skewed to acidic residues. The tract at residues 1186-1224 (SAESNDDQDAELADNVGDYEANNQEDGLSDSDSTRILLS) is disordered. Residues 1206–1224 (ANNQEDGLSDSDSTRILLS) show a composition bias toward polar residues.

Belongs to the peptidase M14 family. Requires Zn(2+) as cofactor.

Its subcellular location is the cytoplasm. The protein localises to the cytosol. It localises to the nucleus. It is found in the mitochondrion. The catalysed reaction is (L-glutamyl)(n+1)-gamma-L-glutamyl-L-glutamyl-[protein] + H2O = (L-glutamyl)(n)-gamma-L-glutamyl-L-glutamyl-[protein] + L-glutamate. The enzyme catalyses C-terminal L-alpha-aminoacyl-L-glutamyl-L-glutamyl-[tubulin] + H2O = C-terminal L-alpha-aminoacyl-L-glutamyl-[tubulin] + L-glutamate. Metallocarboxypeptidase that mediates protein deglutamylation of tubulin and non-tubulin target proteins. Catalyzes the removal of polyglutamate side chains present on the gamma-carboxyl group of glutamate residues within the C-terminal tail of alpha- and beta-tubulin. Specifically cleaves tubulin long-side-chains, while it is not able to remove the branching point glutamate. Also catalyzes the removal of polyglutamate residues from the carboxy-terminus of alpha-tubulin as well as non-tubulin proteins. The sequence is that of Cytosolic carboxypeptidase 1 (AGTPBP1) from Gallus gallus (Chicken).